The following is a 426-amino-acid chain: Glutamate-1-semialdehyde 2,1-aminomutase (426 aa).

K265 is modified (N6-(pyridoxal phosphate)lysine).

This sequence belongs to the class-III pyridoxal-phosphate-dependent aminotransferase family. HemL subfamily. As to quaternary structure, homodimer. Pyridoxal 5'-phosphate is required as a cofactor.

It localises to the cytoplasm. The enzyme catalyses (S)-4-amino-5-oxopentanoate = 5-aminolevulinate. It participates in porphyrin-containing compound metabolism; protoporphyrin-IX biosynthesis; 5-aminolevulinate from L-glutamyl-tRNA(Glu): step 2/2. In Salmonella schwarzengrund (strain CVM19633), this protein is Glutamate-1-semialdehyde 2,1-aminomutase.